A 162-amino-acid chain; its full sequence is Anaerobic nitrite reductase GLB1 (162 aa).

A Globin domain is found at 9-159; that stretch reads VFSEEKEALV…LVAAIKQEMK (151 aa). Positions 42–46 match the Homodimerization motif; it reads EIAPS. Positions 66, 70, 100, 104, and 105 each coordinate heme b. The Homodimerization signature appears at 112–124; that stretch reads DGHFEVTRFALLE.

The protein belongs to the plant globin family. In terms of assembly, homodimer. Heme b serves as cofactor. In terms of tissue distribution, seeds and roots.

It localises to the cytoplasm. The protein localises to the nucleus. The catalysed reaction is Fe(III)-heme b-[protein] + nitric oxide + H2O = Fe(II)-heme b-[protein] + nitrite + 2 H(+). Its function is as follows. Phytoglobin that reduces nitrite to nitric oxide (NO) under anoxic conditions (e.g. during flooding or in waterlogged soil). May not function as an oxygen storage or transport protein. Has an unusually high affinity for O(2) through an hexacoordinate heme iron because of a very low dissociation constant. The chain is Anaerobic nitrite reductase GLB1 from Hordeum vulgare (Barley).